Here is a 313-residue protein sequence, read N- to C-terminus: Lactamase-like protein nscB (313 aa).

Zn(2+) is bound by residues histidine 97, histidine 99, aspartate 101, and histidine 102. Residue aspartate 101 is the Proton donor/acceptor of the active site.

The protein belongs to the metallo-beta-lactamase superfamily. Zn(2+) serves as cofactor.

Its pathway is secondary metabolite biosynthesis. In terms of biological role, lactamase-like protein; part of the gene cluster that mediates the biosynthesis of neosartoricin B, a prenylated anthracenone that probably exhibits T-cell antiproliferative activity, suggestive of a physiological role as an immunosuppressive agent. The non-reducing polyketide synthase nscA probably synthesizes and cyclizes the decaketide backbone. The hydrolase nscB then mediates the product release through hydrolysis followed by spontaneous decarboxylation. The prenyltransferase nscD catalyzes the addition of the dimethylallyl group to the aromatic C5. The FAD-dependent monooxygenase nscC is then responsible for the stereospecific hydroxylation at C2. Neosartoricin B can be converted into two additional compounds neosartoricins C and D. Neosartoricin C is a spirocyclic compound that is cyclized through the attack of C3 hydroxyl on C14, followed by dehydration. On the other hand, neosartoricin D is a further cyclized compound in which attack of C2 on C14 in neosartoricin C results in the formation of the acetal-containing dioxabicyclo-octanone ring. Both of these compounds are novel and possibly represent related metabolites of the gene cluster. The protein is Lactamase-like protein nscB of Arthroderma gypseum (strain ATCC MYA-4604 / CBS 118893) (Microsporum gypseum).